Reading from the N-terminus, the 447-residue chain is N-succinylarginine dihydrolase (447 aa).

Residues 19 to 28 (AGLSFGNEAS), Asn-110, and 137 to 138 (HR) each bind substrate. The active site involves Glu-174. Residue Arg-212 coordinates substrate. Residue His-248 is part of the active site. Asp-250 and Asn-359 together coordinate substrate. Cys-365 (nucleophile) is an active-site residue.

The protein belongs to the succinylarginine dihydrolase family. As to quaternary structure, homodimer.

The catalysed reaction is N(2)-succinyl-L-arginine + 2 H2O + 2 H(+) = N(2)-succinyl-L-ornithine + 2 NH4(+) + CO2. It participates in amino-acid degradation; L-arginine degradation via AST pathway; L-glutamate and succinate from L-arginine: step 2/5. Its function is as follows. Catalyzes the hydrolysis of N(2)-succinylarginine into N(2)-succinylornithine, ammonia and CO(2). The protein is N-succinylarginine dihydrolase of Escherichia coli O8 (strain IAI1).